The chain runs to 617 residues: Hemagglutinin glycoprotein (617 aa).

Residues 1–37 lie on the Intravirion side of the membrane; the sequence is MSPQRDRINAFYKDNPHPKGSRIVINREHLMIDRPYV. A stalk region spans residues 1–154; sequence MSPQRDRINA…RIKLDYDQYC (154 aa). The helical; Signal-anchor for type II membrane protein transmembrane segment at 38–58 threads the bilayer; the sequence is LLAVLFVMFLSLIGLLAIAGI. Topologically, residues 59–617 are virion surface; that stretch reads RLHRAAIYTA…VTREDGTNRR (559 aa). N168, N187, N200, N215, and N238 each carry an N-linked (GlcNAc...) asparagine; by host glycan. 5 disulfides stabilise this stretch: C188-C606, C287-C300, C381-C494, C386-C394, and C570-C579. The interaction with host NECTIN4 receptor stretch occupies residues 458–543; the sequence is PMKNLALGVI…VEHAVVYYVY (86 aa).

This sequence belongs to the paramyxoviruses hemagglutinin-neuraminidase family. Non-sialidase subfamily. In terms of assembly, homodimer; disulfide-linked. Further forms homotetramer (dimer of dimers). Interacts (via C-terminus) with human NECTIN4 (via N-terminus); this interaction allows attachment to the respiratory epithelium and viral entry. Interacts (via C-terminus) with human SLAMF1/CD150 (via N-terminus); this interaction allows attachment and viral entry into the CD150-expressing immune cells. Interacts with human CD46 antigen (via N-terminus); this interaction allows attachment and viral entry of vaccine and laboratory-adapted strains.

Its subcellular location is the virion membrane. It is found in the host cell membrane. Functionally, attaches the virus to the human SLAMF1/CD150 receptor for entry into host dendritic cells, macrophages, activated memory T cells and naive or memory B cells, thereby explaining the long immunosuppression that follows infection. In the respiratory airways, binds to the NECTIN4 receptor for entry into the host cell. Binding of H protein to the receptor induces a conformational change that allows the F protein to trigger virion/cell membranes fusion. The vaccine and laboratory-adapted strains use host CD46 as an alternate receptor. The high degree of interaction between H and CD46 results in down-regulation of the latter from the surface of infected cells, rendering them more sensitive to c3b-mediated complement lysis. The chain is Hemagglutinin glycoprotein (H) from Measles virus (strain Edmonston) (MeV).